The sequence spans 473 residues: Bifunctional protein HldE (473 aa).

The interval 1–318 is ribokinase; the sequence is MKLSMPRFDQ…RAVQREEGSE (318 aa). An ATP-binding site is contributed by 194-197; it reads NLGE. Asp263 is an active-site residue. The tract at residues 343–473 is cytidylyltransferase; the sequence is FTNGCFDILH…TAIVEKIRKA (131 aa).

In the N-terminal section; belongs to the carbohydrate kinase PfkB family. It in the C-terminal section; belongs to the cytidylyltransferase family. Homodimer.

The catalysed reaction is D-glycero-beta-D-manno-heptose 7-phosphate + ATP = D-glycero-beta-D-manno-heptose 1,7-bisphosphate + ADP + H(+). It carries out the reaction D-glycero-beta-D-manno-heptose 1-phosphate + ATP + H(+) = ADP-D-glycero-beta-D-manno-heptose + diphosphate. Its pathway is nucleotide-sugar biosynthesis; ADP-L-glycero-beta-D-manno-heptose biosynthesis; ADP-L-glycero-beta-D-manno-heptose from D-glycero-beta-D-manno-heptose 7-phosphate: step 1/4. The protein operates within nucleotide-sugar biosynthesis; ADP-L-glycero-beta-D-manno-heptose biosynthesis; ADP-L-glycero-beta-D-manno-heptose from D-glycero-beta-D-manno-heptose 7-phosphate: step 3/4. In terms of biological role, catalyzes the phosphorylation of D-glycero-D-manno-heptose 7-phosphate at the C-1 position to selectively form D-glycero-beta-D-manno-heptose-1,7-bisphosphate. Its function is as follows. Catalyzes the ADP transfer from ATP to D-glycero-beta-D-manno-heptose 1-phosphate, yielding ADP-D-glycero-beta-D-manno-heptose. The protein is Bifunctional protein HldE of Stutzerimonas stutzeri (strain A1501) (Pseudomonas stutzeri).